Reading from the N-terminus, the 103-residue chain is Large ribosomal subunit protein bL21 (103 aa).

This sequence belongs to the bacterial ribosomal protein bL21 family. As to quaternary structure, part of the 50S ribosomal subunit. Contacts protein L20.

This protein binds to 23S rRNA in the presence of protein L20. This is Large ribosomal subunit protein bL21 from Nautilia profundicola (strain ATCC BAA-1463 / DSM 18972 / AmH).